The primary structure comprises 427 residues: Enolase (427 aa).

Gln162 contacts (2R)-2-phosphoglycerate. Catalysis depends on Glu204, which acts as the Proton donor. Residues Asp241, Glu284, and Asp311 each coordinate Mg(2+). Residues Lys336, Arg365, Ser366, and Lys387 each coordinate (2R)-2-phosphoglycerate. Lys336 serves as the catalytic Proton acceptor.

This sequence belongs to the enolase family. Mg(2+) is required as a cofactor.

The protein resides in the cytoplasm. It localises to the secreted. The protein localises to the cell surface. The catalysed reaction is (2R)-2-phosphoglycerate = phosphoenolpyruvate + H2O. It participates in carbohydrate degradation; glycolysis; pyruvate from D-glyceraldehyde 3-phosphate: step 4/5. Functionally, catalyzes the reversible conversion of 2-phosphoglycerate (2-PG) into phosphoenolpyruvate (PEP). It is essential for the degradation of carbohydrates via glycolysis. The chain is Enolase from Natranaerobius thermophilus (strain ATCC BAA-1301 / DSM 18059 / JW/NM-WN-LF).